A 402-amino-acid polypeptide reads, in one-letter code: E3 ubiquitin-protein ligase MARCHF11 (402 aa).

A compositionally biased stretch (gly residues) spans 1 to 11 (MSFEGGHGGSR). A disordered region spans residues 1–161 (MSFEGGHGGS…SGGGDQRAGH (161 aa)). Positions 21-56 (EPPPQPPPPPPPTPPPGEPAPVPAAPRYLPPLPASP) are enriched in pro residues. Over residues 111-124 (EAAAAKGGPGESEA) the composition is skewed to low complexity. The RING-CH-type zinc finger occupies 162-222 (QHQHHQPICK…ELCCYRYHVI (61 aa)). Cys170, Cys173, Cys186, Cys188, His196, Cys199, Cys212, and Cys215 together coordinate Zn(2+). Helical transmembrane passes span 245-265 (MIAV…LLWS) and 278-298 (ILFQ…IGLI). Residues 371 to 374 (YVLL) carry the YXXL motif motif. A PDZ-binding motif is present at residues 399-402 (VTSV).

In terms of assembly, interacts (YXXL motif) with AP1M1. Interacts (via PDZ-binding motif) with LIN7A. Interacts with unidentified fucose glycoproteins.

Its subcellular location is the cytoplasmic vesicle membrane. It carries out the reaction S-ubiquitinyl-[E2 ubiquitin-conjugating enzyme]-L-cysteine + [acceptor protein]-L-lysine = [E2 ubiquitin-conjugating enzyme]-L-cysteine + N(6)-ubiquitinyl-[acceptor protein]-L-lysine.. The protein operates within protein modification; protein ubiquitination. Functionally, E3 ubiquitin-protein ligase that mediates polyubiquitination of CD4. E3 ubiquitin ligases accept ubiquitin from an E2 ubiquitin-conjugating enzyme in the form of a thioester and then directly transfer the ubiquitin to targeted substrates. May play a role in ubuquitin-dependent protein sorting in developmenting spermatids. This Homo sapiens (Human) protein is E3 ubiquitin-protein ligase MARCHF11.